The chain runs to 450 residues: Regulator of sigma E protease (450 aa).

Histidine 22 is a binding site for Zn(2+). The active site involves glutamate 23. Histidine 26 is a Zn(2+) binding site. Residues 98–120 (AAIIAAGPVANFIFAIFAYWLVF) traverse the membrane as a helical segment. PDZ domains are found at residues 115–186 (AYWL…APFG) and 199–291 (HWAF…TPDT). A run of 2 helical transmembrane segments spans residues 376–398 (VIYY…LFPL) and 426–445 (FSYR…ALFN).

It belongs to the peptidase M50B family. In terms of assembly, interacts with RseA. Zn(2+) is required as a cofactor.

The protein resides in the cell inner membrane. Functionally, a site-2 regulated intramembrane protease (S2P) that cleaves the peptide bond between 'Ala-108' and 'Cys-109' in the transmembrane region of RseA. Part of a regulated intramembrane proteolysis (RIP) cascade. Acts on DegS-cleaved RseA to release the cytoplasmic domain of RseA. This provides the cell with sigma-E (RpoE) activity through the proteolysis of RseA. The polypeptide is Regulator of sigma E protease (rseP) (Salmonella typhi).